Consider the following 179-residue polypeptide: Hypoxanthine-guanine phosphoribosyltransferase (179 aa).

Positions 42 and 43 each coordinate diphosphate. Mg(2+) contacts are provided by Glu98 and Asp99. Catalysis depends on Glu102, which acts as the Proton acceptor. GMP-binding positions include Lys130, 151 to 152 (FV), and Asp158. Arg164 contacts diphosphate.

The protein belongs to the purine/pyrimidine phosphoribosyltransferase family. The cofactor is Mg(2+).

It is found in the cytoplasm. The enzyme catalyses IMP + diphosphate = hypoxanthine + 5-phospho-alpha-D-ribose 1-diphosphate. It catalyses the reaction GMP + diphosphate = guanine + 5-phospho-alpha-D-ribose 1-diphosphate. The protein operates within purine metabolism; IMP biosynthesis via salvage pathway; IMP from hypoxanthine: step 1/1. It participates in purine metabolism; GMP biosynthesis via salvage pathway; GMP from guanine: step 1/1. Functionally, purine salvage pathway enzyme that catalyzes the transfer of the ribosyl-5-phosphate group from 5-phospho-alpha-D-ribose 1-diphosphate (PRPP) to the N9 position of the 6-oxopurines hypoxanthine and guanine to form the corresponding ribonucleotides IMP (inosine 5'-monophosphate) and GMP (guanosine 5'-monophosphate), with the release of PPi. This Staphylococcus aureus (strain COL) protein is Hypoxanthine-guanine phosphoribosyltransferase (hpt).